Consider the following 115-residue polypeptide: Protein SPIRAL1-like 2 (115 aa).

The disordered stretch occupies residues 29 to 48 (AKAKPAAAAEKETTPAPVKK).

It belongs to the SPIRAL1 family.

Acts in maintaining the cortical microtubules organization essential for anisotropic cell growth. The polypeptide is Protein SPIRAL1-like 2 (Oryza sativa subsp. japonica (Rice)).